Consider the following 167-residue polypeptide: UPF0598 protein CG30010 (167 aa).

Belongs to the UPF0598 family.

In Drosophila melanogaster (Fruit fly), this protein is UPF0598 protein CG30010.